Here is a 117-residue protein sequence, read N- to C-terminus: Putative phosphotransferase enzyme IIB component MG129 (117 aa).

Residues 1-21 (MKWLLWLGYIFSFGLLYLWIV) form a helical membrane-spanning segment. In terms of domain architecture, PTS EIIB type-1 spans 42–117 (PFKVKDFVSA…ELKKKIEDEQ (76 aa)).

It localises to the membrane. Its function is as follows. The phosphoenolpyruvate-dependent sugar phosphotransferase system (PTS), a major carbohydrate active -transport system, catalyzes the phosphorylation of incoming sugar substrates concomitant with their translocation across the cell membrane. This Mycoplasma genitalium (strain ATCC 33530 / DSM 19775 / NCTC 10195 / G37) (Mycoplasmoides genitalium) protein is Putative phosphotransferase enzyme IIB component MG129.